Consider the following 197-residue polypeptide: Probable nicotinate-nucleotide adenylyltransferase (197 aa).

Belongs to the NadD family.

It catalyses the reaction nicotinate beta-D-ribonucleotide + ATP + H(+) = deamido-NAD(+) + diphosphate. It functions in the pathway cofactor biosynthesis; NAD(+) biosynthesis; deamido-NAD(+) from nicotinate D-ribonucleotide: step 1/1. Catalyzes the reversible adenylation of nicotinate mononucleotide (NaMN) to nicotinic acid adenine dinucleotide (NaAD). This Borrelia garinii subsp. bavariensis (strain ATCC BAA-2496 / DSM 23469 / PBi) (Borreliella bavariensis) protein is Probable nicotinate-nucleotide adenylyltransferase.